The sequence spans 303 residues: Zinc transporter ZIP9 (303 aa).

The chain crosses the membrane as a helical span at residues 7 to 27 (ISLLSLAMLVGCYVSGIIPLA). Asn29 is a glycosylation site (N-linked (GlcNAc...) asparagine). 5 helical membrane-spanning segments follow: residues 35 to 55 (LKLV…AVIV), 102 to 122 (AYIG…DQIG), 142 to 162 (ITTT…LGAA), 172 to 192 (LIVF…LVSF), and 206 to 226 (HLLV…LGLS). Asn237 carries N-linked (GlcNAc...) asparagine glycosylation. 2 helical membrane-spanning segments follow: residues 240–260 (GVAM…HVLP) and 282–302 (LEVC…IGHQ).

The protein belongs to the ZIP transporter (TC 2.A.5) family.

It localises to the golgi apparatus. Its subcellular location is the trans-Golgi network membrane. It is found in the cell membrane. The protein resides in the cytoplasm. The protein localises to the perinuclear region. It localises to the mitochondrion. Its subcellular location is the nucleus. It carries out the reaction Zn(2+)(in) = Zn(2+)(out). Its function is as follows. Transports zinc ions across cell and organelle membranes into the cytoplasm and regulates intracellular zinc homeostasis. Participates in the zinc ions efflux out of the secretory compartments. Also functions as a membrane androgen receptor that mediates, through a G protein, the non-classical androgen signaling pathway, characterized by the activation of MAPK3/MAPK1 (Erk1/2) and transcription factors CREB1 or ATF1. Moreover, has dual functions as a membrane-bound androgen receptor and as an androgen-dependent zinc transporter both of which are mediated through an inhibitory G protein (Gi) that mediates both MAP kinase and zinc signaling leading to the androgen-dependent apoptotic process. This chain is Zinc transporter ZIP9, found in Xenopus tropicalis (Western clawed frog).